A 419-amino-acid chain; its full sequence is Epothilone C/D epoxidase (419 aa).

The substrate site is built by alanine 180 and glycine 304. Cysteine 365 is a heme binding site.

This sequence belongs to the cytochrome P450 family. Requires heme as cofactor.

It catalyses the reaction epothilone C + 2 reduced [2Fe-2S]-[ferredoxin] + O2 + 2 H(+) = epothilone A + 2 oxidized [2Fe-2S]-[ferredoxin] + H2O. It carries out the reaction epothilone D + 2 reduced [2Fe-2S]-[ferredoxin] + O2 + 2 H(+) = epothilone B + 2 oxidized [2Fe-2S]-[ferredoxin] + H2O. It functions in the pathway secondary metabolite biosynthesis; epothilone biosynthesis. In terms of biological role, involved in the biosynthesis of epothilones, macrolactones which have a narrow anti-fungal spectrum and microtubule-stabilizing activity. Catalyzes the epoxidation of epothilones C and D to epothilones A and B, respectively. The chain is Epothilone C/D epoxidase (cyp167A1) from Sorangium cellulosum (Polyangium cellulosum).